The chain runs to 115 residues: Large ribosomal subunit protein bL20 (115 aa).

It belongs to the bacterial ribosomal protein bL20 family.

In terms of biological role, binds directly to 23S ribosomal RNA and is necessary for the in vitro assembly process of the 50S ribosomal subunit. It is not involved in the protein synthesizing functions of that subunit. This Chlorobaculum tepidum (strain ATCC 49652 / DSM 12025 / NBRC 103806 / TLS) (Chlorobium tepidum) protein is Large ribosomal subunit protein bL20.